A 280-amino-acid chain; its full sequence is METIATRLAILPFPEIDPVIFTIGPLAVRWYGLAYVVGILLGWFYARRIVQNAALWRNGTPACNLTQLDDFLLWAAGGIVLGGRIGYILFYDLGSILDDPLRAIQIWNGGMSFHGGLVGTTLAMIIFARRNAIPIWSLFDVVAAVVPIGLFFGRIANFINGELWGRLSSVPWAVVFPTGGPFARHPSQLYEAALEGLVLLAVLAWFVYRRKALKIPGLVTGIFVCGYAASRIFVEFFREPDAQIGYLAGDWLTMGMVLSVPMALIGIWAIARARSAAAAA.

Transmembrane regions (helical) follow at residues 30 to 50 (WYGLAYVVGILLGWFYARRIV), 71 to 91 (FLLWAAGGIVLGGRIGYILFY), 106 to 126 (IWNGGMSFHGGLVGTTLAMII), and 132 to 152 (AIPIWSLFDVVAAVVPIGLFF). R154 contacts a 1,2-diacyl-sn-glycero-3-phospho-(1'-sn-glycerol). The next 3 membrane-spanning stretches (helical) occupy residues 188–208 (QLYEAALEGLVLLAVLAWFVY), 217–237 (GLVTGIFVCGYAASRIFVEFF), and 251–271 (WLTMGMVLSVPMALIGIWAIA).

Belongs to the Lgt family.

Its subcellular location is the cell inner membrane. The catalysed reaction is L-cysteinyl-[prolipoprotein] + a 1,2-diacyl-sn-glycero-3-phospho-(1'-sn-glycerol) = an S-1,2-diacyl-sn-glyceryl-L-cysteinyl-[prolipoprotein] + sn-glycerol 1-phosphate + H(+). It functions in the pathway protein modification; lipoprotein biosynthesis (diacylglyceryl transfer). In terms of biological role, catalyzes the transfer of the diacylglyceryl group from phosphatidylglycerol to the sulfhydryl group of the N-terminal cysteine of a prolipoprotein, the first step in the formation of mature lipoproteins. This chain is Phosphatidylglycerol--prolipoprotein diacylglyceryl transferase, found in Sinorhizobium medicae (strain WSM419) (Ensifer medicae).